The following is a 258-amino-acid chain: 6-phosphogluconolactonase (258 aa).

Ala-2 is subject to N-acetylalanine. At Ser-49 the chain carries Phosphoserine. At Lys-180 the chain carries N6-acetyllysine.

It belongs to the glucosamine/galactosamine-6-phosphate isomerase family. 6-phosphogluconolactonase subfamily.

The protein resides in the cytoplasm. The enzyme catalyses 6-phospho-D-glucono-1,5-lactone + H2O = 6-phospho-D-gluconate + H(+). It participates in carbohydrate degradation; pentose phosphate pathway; D-ribulose 5-phosphate from D-glucose 6-phosphate (oxidative stage): step 2/3. Functionally, hydrolysis of 6-phosphogluconolactone to 6-phosphogluconate. This chain is 6-phosphogluconolactonase, found in Homo sapiens (Human).